Here is a 498-residue protein sequence, read N- to C-terminus: Cytochrome P450 71B24 (498 aa).

Residues 1-21 (MSILLYFIALLSLIIIKKIKD) form a helical membrane-spanning segment. Cys-442 contacts heme.

The protein belongs to the cytochrome P450 family. Heme is required as a cofactor.

It is found in the membrane. The chain is Cytochrome P450 71B24 (CYP71B24) from Arabidopsis thaliana (Mouse-ear cress).